Consider the following 305-residue polypeptide: Peroxisome assembly protein 26 (305 aa).

Residues 1–20 are disordered; the sequence is MKSDSSTSAAPLRGLGGPLR. At 1–246 the chain is on the cytoplasmic side; that stretch reads MKSDSSTSAA…RQLWDSAVSH (246 aa). Residues 247–267 traverse the membrane as a helical; Signal-anchor for type II membrane protein segment; sequence FFSLPFKKSLLAALILCLLVV. Over 268–305 the chain is Peroxisomal matrix; that stretch reads RFDPASPSSLHFLYKLAQLFRWIRKAAFSRLYQLRIRD.

It belongs to the peroxin-26 family. Interacts (via its cytoplasmic domain) with PEX6; interaction is direct and is ATP-dependent. Interacts with PEX1; interaction is indirect and is mediated via interaction with PEX6. As to expression, widely expressed. Highly expressed in kidney, liver, brain and skeletal muscles. Expressed at intermediate level in pancreas, placenta and heart. Weakly expressed in lung.

The protein localises to the peroxisome membrane. Peroxisomal docking factor that anchors PEX1 and PEX6 to peroxisome membranes. PEX26 is therefore required for the formation of the PEX1-PEX6 AAA ATPase complex, a complex that mediates the extraction of the PEX5 receptor from peroxisomal membrane. The chain is Peroxisome assembly protein 26 from Homo sapiens (Human).